Here is a 648-residue protein sequence, read N- to C-terminus: Transmembrane 9 superfamily member 8 (648 aa).

The signal sequence occupies residues 1 to 33; it reads MAMEFLRSSRRILESSGCAIALIFLLFIHGAHS. Topologically, residues 34-285 are lumenal; the sequence is FYLPGVAPQD…YLLMSDNQIH (252 aa). The helical transmembrane segment at 286 to 306 threads the bilayer; the sequence is WFSIVNSLMIVLFLSGMVAMI. At 307–355 the chain is on the cytoplasmic side; it reads MLRTLYRDISRYNELETQEEAQEETGWKLVHGDVFRLPTNSDLLCVYVG. A helical membrane pass occupies residues 356 to 376; the sequence is TGVQCLGMVFVTMIFAMLGFL. Residues 377–381 are Lumenal-facing; that stretch reads SPSNR. Residues 382 to 402 traverse the membrane as a helical segment; that stretch reads GGLMTAMLLLWVFMGLFAGYA. Residues 403–422 lie on the Cytoplasmic side of the membrane; sequence SSRLYKMFKGTEWKRIAFRT. The chain crosses the membrane as a helical span at residues 423 to 443; it reads AFLFPAVVSAIFFVLNALIWG. The Lumenal segment spans residues 444–455; it reads QKSSGAVPFGTM. A helical transmembrane segment spans residues 456–476; sequence FALIFLWFGISVPLVFVGGYI. The Cytoplasmic portion of the chain corresponds to 477-506; it reads GFKKPAADDPVKTNKIPRQIPEQAWYMNPV. The helical transmembrane segment at 507-527 threads the bilayer; the sequence is FSILIGGILPFGAVFIELFFI. At 528 to 538 the chain is on the lumenal side; the sequence is LTSIWLNQFYY. The helical transmembrane segment at 539–559 threads the bilayer; the sequence is IFGFLFLVFVILIVTCAEITV. The Cytoplasmic segment spans residues 560-577; the sequence is VLCYFQLCSEDYLWWWRS. A helical transmembrane segment spans residues 578-598; that stretch reads YLTSGSSALYLFLYATFYFFT. The Lumenal segment spans residues 599 to 604; sequence KLQITK. A helical transmembrane segment spans residues 605–625; that stretch reads LVSAMLYFGYMLIASYAFFVL. Over 626–648 the chain is Cytoplasmic; the sequence is TGTIGFYACLWFTRLIYSSVKID. Residues 637 to 642 carry the Endoplasmic reticulum export signal motif; that stretch reads FTRLIY. The Golgi retention signal signature appears at 646-648; sequence KID.

Belongs to the nonaspanin (TM9SF) (TC 9.A.2) family.

The protein resides in the endosome membrane. It localises to the golgi apparatus membrane. The polypeptide is Transmembrane 9 superfamily member 8 (Arabidopsis thaliana (Mouse-ear cress)).